Here is a 377-residue protein sequence, read N- to C-terminus: WAT1-related protein At3g56620 (377 aa).

10 helical membrane passes run 13–33, 40–60, 67–87, 102–122, 142–162, 183–203, 210–230, 235–255, 274–294, and 299–319; these read FAMVCLQFGYAGMNLVTKVVL, YVLVAYRNAFATAAIAPFALL, PKMTFPIFMQIFVLALLGPLI, TFAGAVTNIVPALTFIISIIC, LVIVVGAMLMILFKIPLITFL, VFLLIASFSWASFFVLQAATL, LSLSTMVCFMGTLQSTALTFV, LSAWNIGFDMNLLASAYAGIM, IFVTAFNPLVVIIGSIIGFLI, and LNLGGVLGMAILVVGVCTVLW. EamA domains are found at residues 22–152 and 190–318; these read YAGM…MLMI and FSWA…CTVL.

Belongs to the drug/metabolite transporter (DMT) superfamily. Plant drug/metabolite exporter (P-DME) (TC 2.A.7.4) family.

The protein localises to the membrane. The chain is WAT1-related protein At3g56620 from Arabidopsis thaliana (Mouse-ear cress).